Consider the following 51-residue polypeptide: MKKERTKVFGRGANECRRCGRRRGLIRMYGLYLCRQCFREVASELGFKKYW.

Positions 16, 19, 34, and 37 each coordinate Zn(2+).

This sequence belongs to the universal ribosomal protein uS14 family. Zinc-binding uS14 subfamily. In terms of assembly, part of the 30S ribosomal subunit. Zn(2+) is required as a cofactor.

Functionally, binds 16S rRNA, required for the assembly of 30S particles. In Archaeoglobus fulgidus (strain ATCC 49558 / DSM 4304 / JCM 9628 / NBRC 100126 / VC-16), this protein is Small ribosomal subunit protein uS14.